Here is a 274-residue protein sequence, read N- to C-terminus: Thymidylate synthase (274 aa).

Arg21 is a binding site for dUMP. A (6R)-5,10-methylene-5,6,7,8-tetrahydrofolate-binding site is contributed by His51. Residue 123–124 (RR) coordinates dUMP. The active-site Nucleophile is the Cys156. DUMP-binding positions include 176–179 (RSAD), Asn187, and 217–219 (HIY). (6R)-5,10-methylene-5,6,7,8-tetrahydrofolate is bound at residue Asp179. Ala273 provides a ligand contact to (6R)-5,10-methylene-5,6,7,8-tetrahydrofolate.

This sequence belongs to the thymidylate synthase family. Bacterial-type ThyA subfamily. In terms of assembly, homodimer.

It localises to the cytoplasm. It carries out the reaction dUMP + (6R)-5,10-methylene-5,6,7,8-tetrahydrofolate = 7,8-dihydrofolate + dTMP. Its pathway is pyrimidine metabolism; dTTP biosynthesis. Its function is as follows. Catalyzes the reductive methylation of 2'-deoxyuridine-5'-monophosphate (dUMP) to 2'-deoxythymidine-5'-monophosphate (dTMP) while utilizing 5,10-methylenetetrahydrofolate (mTHF) as the methyl donor and reductant in the reaction, yielding dihydrofolate (DHF) as a by-product. This enzymatic reaction provides an intracellular de novo source of dTMP, an essential precursor for DNA biosynthesis. The chain is Thymidylate synthase from Flavobacterium psychrophilum (strain ATCC 49511 / DSM 21280 / CIP 103535 / JIP02/86).